The sequence spans 188 residues: Ribosome-recycling factor (188 aa).

It belongs to the RRF family.

It localises to the cytoplasm. Functionally, responsible for the release of ribosomes from messenger RNA at the termination of protein biosynthesis. May increase the efficiency of translation by recycling ribosomes from one round of translation to another. The chain is Ribosome-recycling factor from Bradyrhizobium diazoefficiens (strain JCM 10833 / BCRC 13528 / IAM 13628 / NBRC 14792 / USDA 110).